The sequence spans 547 residues: Beta,beta-carotene 15,15'-dioxygenase (547 aa).

Positions 172, 237, 308, and 514 each coordinate Fe cation. The segment covering 528–540 (QAASEEQRDRASD) has biased composition (basic and acidic residues). The segment at 528 to 547 (QAASEEQRDRASDCHGAPLT) is disordered.

The protein belongs to the carotenoid oxygenase family. Fe(2+) is required as a cofactor. Highly expressed in retinal pigment epithelium. Also expressed in kidney, testis, liver, brain, small intestine and colon.

The protein localises to the cytoplasm. The protein resides in the cytosol. The enzyme catalyses all-trans-beta-carotene + O2 = 2 all-trans-retinal. It participates in cofactor metabolism; retinol metabolism. Functionally, symmetrically cleaves beta-carotene into two molecules of retinal using a dioxygenase mechanism. In Homo sapiens (Human), this protein is Beta,beta-carotene 15,15'-dioxygenase.